Here is a 338-residue protein sequence, read N- to C-terminus: Glycerol-3-phosphate dehydrogenase [NAD(P)+] (338 aa).

Positions 13, 14, and 108 each coordinate NADPH. Residues lysine 108, glycine 139, and serine 141 each contribute to the sn-glycerol 3-phosphate site. An NADPH-binding site is contributed by alanine 143. Sn-glycerol 3-phosphate is bound by residues lysine 194, aspartate 247, serine 257, arginine 258, and asparagine 259. The active-site Proton acceptor is the lysine 194. Arginine 258 lines the NADPH pocket. The NADPH site is built by valine 282 and glutamate 284.

Its subcellular location is the cytoplasm. The enzyme catalyses sn-glycerol 3-phosphate + NAD(+) = dihydroxyacetone phosphate + NADH + H(+). It carries out the reaction sn-glycerol 3-phosphate + NADP(+) = dihydroxyacetone phosphate + NADPH + H(+). It participates in membrane lipid metabolism; glycerophospholipid metabolism. Functionally, catalyzes the reduction of the glycolytic intermediate dihydroxyacetone phosphate (DHAP) to sn-glycerol 3-phosphate (G3P), the key precursor for phospholipid synthesis. The polypeptide is Glycerol-3-phosphate dehydrogenase [NAD(P)+] (Streptococcus pyogenes serotype M6 (strain ATCC BAA-946 / MGAS10394)).